The sequence spans 144 residues: D-aminoacyl-tRNA deacylase (144 aa).

The Gly-cisPro motif, important for rejection of L-amino acids signature appears at 136-137; that stretch reads GP.

Belongs to the DTD family. Homodimer.

The protein resides in the cytoplasm. The enzyme catalyses glycyl-tRNA(Ala) + H2O = tRNA(Ala) + glycine + H(+). The catalysed reaction is a D-aminoacyl-tRNA + H2O = a tRNA + a D-alpha-amino acid + H(+). In terms of biological role, an aminoacyl-tRNA editing enzyme that deacylates mischarged D-aminoacyl-tRNAs. Also deacylates mischarged glycyl-tRNA(Ala), protecting cells against glycine mischarging by AlaRS. Acts via tRNA-based rather than protein-based catalysis; rejects L-amino acids rather than detecting D-amino acids in the active site. By recycling D-aminoacyl-tRNA to D-amino acids and free tRNA molecules, this enzyme counteracts the toxicity associated with the formation of D-aminoacyl-tRNA entities in vivo and helps enforce protein L-homochirality. The sequence is that of D-aminoacyl-tRNA deacylase from Vibrio parahaemolyticus serotype O3:K6 (strain RIMD 2210633).